The chain runs to 96 residues: ESAT-6-like protein SAG0230 (96 aa).

Belongs to the WXG100 family. sagEsxA-like subfamily. Homodimer.

In Streptococcus agalactiae serotype V (strain ATCC BAA-611 / 2603 V/R), this protein is ESAT-6-like protein SAG0230.